Reading from the N-terminus, the 179-residue chain is Gut granule loss protein 3 (179 aa).

Residues 40 to 59 form a disordered region; it reads DLDSASSGVGSSTCTEEQES. Over residues 42 to 54 the composition is skewed to polar residues; it reads DSASSGVGSSTCT.

The protein is Gut granule loss protein 3 (glo-3) of Caenorhabditis elegans.